Here is a 104-residue protein sequence, read N- to C-terminus: UPF0235 protein Sfri_2863 (104 aa).

It belongs to the UPF0235 family.

This is UPF0235 protein Sfri_2863 from Shewanella frigidimarina (strain NCIMB 400).